We begin with the raw amino-acid sequence, 1216 residues long: 1-phosphatidylinositol 4,5-bisphosphate phosphodiesterase beta-1 (1216 aa).

Cys17 is lipidated: S-palmitoyl cysteine. Ser236 is subject to Phosphoserine. One can recognise a PI-PLC X-box domain in the interval Glu316 to Lys467. Active-site residues include His331 and His378. At Ser417 the chain carries Phosphoserine. The interval Lys469–Ala534 is disordered. Residues Lys472 to Ser483 show a composition bias toward basic and acidic residues. Low complexity predominate over residues Ser491 to Ser501. Positions Ala507 to Asp518 are enriched in acidic residues. A Phosphothreonine modification is found at Thr509. A phosphoserine mark is found at Ser511 and Ser582. The PI-PLC Y-box domain occupies Met540–Arg656. A C2 domain is found at Arg656–Leu784. Disordered stretches follow at residues Asp834–Pro891, Leu933–Asp993, Lys1071–Lys1095, and Lys1172–Leu1216. The residue at position 887 (Ser887) is a Phosphoserine; by PKC. Composition is skewed to basic and acidic residues over residues Thr941–Lys951 and Tyr959–Glu979. Phosphoserine occurs at positions 978 and 987. A compositionally biased stretch (polar residues) spans Pro980–Glu991. Over residues Lys1075 to Lys1095 the composition is skewed to basic and acidic residues. Residues Thr1187–Pro1198 show a composition bias toward polar residues. A phosphoserine mark is found at Ser1199 and Ser1200. The span at Asn1207–Leu1216 shows a compositional bias: basic and acidic residues.

Interacts with DGKQ. The cofactor is Ca(2+). In terms of processing, palmitoylated. Palmitoylation at Cys-17 by ZDHHC21 regulates the signaling activity of PLCB1 and the function of the endothelial barrier. Palmitoylation by ZDHHC21 is stimulated by inflammation.

The protein localises to the nucleus membrane. It localises to the cytoplasm. The enzyme catalyses a 1,2-diacyl-sn-glycero-3-phospho-(1D-myo-inositol-4,5-bisphosphate) + H2O = 1D-myo-inositol 1,4,5-trisphosphate + a 1,2-diacyl-sn-glycerol + H(+). It carries out the reaction a 1,2-diacyl-sn-glycero-3-phospho-(1D-myo-inositol) + H2O = 1D-myo-inositol 1-phosphate + a 1,2-diacyl-sn-glycerol + H(+). In terms of biological role, catalyzes the hydrolysis of 1-phosphatidylinositol 4,5-bisphosphate into diacylglycerol (DAG) and inositol 1,4,5-trisphosphate (IP3) and mediates intracellular signaling downstream of G protein-coupled receptors. Regulates the function of the endothelial barrier. The sequence is that of 1-phosphatidylinositol 4,5-bisphosphate phosphodiesterase beta-1 (PLCB1) from Bos taurus (Bovine).